Consider the following 247-residue polypeptide: 5'-nucleotidase SurE (247 aa).

A divalent metal cation-binding residues include Asp-8, Asp-9, Ser-39, and Asn-91.

This sequence belongs to the SurE nucleotidase family. A divalent metal cation is required as a cofactor.

It localises to the cytoplasm. The catalysed reaction is a ribonucleoside 5'-phosphate + H2O = a ribonucleoside + phosphate. Nucleotidase that shows phosphatase activity on nucleoside 5'-monophosphates. The chain is 5'-nucleotidase SurE from Ruthia magnifica subsp. Calyptogena magnifica.